Consider the following 310-residue polypeptide: Collagen-like protein V6 (310 aa).

Polar residues predominate over residues 1–41; the sequence is MSLSTLFSPNTYNINSKSQTLNNLPSNPTSQTNTLWSNNAY. Residues 1–183 are disordered; the sequence is MSLSTLFSPN…GDPGAKGDPG (183 aa). Collagen-like domains follow at residues 61–119 and 123–182; these read GQKG…KGQA and GLKG…KGDP. The segment covering 92–101 has biased composition (basic and acidic residues); it reads SGDKGDKGDS. 2 N-linked (GlcNAc...) asparagine; by host glycosylation sites follow: asparagine 227 and asparagine 264.

The protein belongs to the sputnik virus V6 family.

This is Collagen-like protein V6 from Sputnik virophage.